The primary structure comprises 250 residues: MRSRWQTLRKWIVKAVLLFFVSSLGFVLLYRFVPVPLTPLMVIRSVSSVWGEEFVGIHKDWVPLEEIAPSVQKAVLKAEDYRFFEHNGFDFDAIEKAMKYNKTHKRKKGASTITQQTAKNVFLWPQRDWVRKGLEAYFTILIESTWPKERIMEVYLNVIELGPGVYGVEAASQKYFKRSAKNLNPYQASLIAAVLPNPRRFRIDRPSNYVVGRQRRILNRVAPAIPKAADASLLDFLDLKFDSEEDESAN.

Residues 15-35 (AVLLFFVSSLGFVLLYRFVPV) traverse the membrane as a helical segment.

Belongs to the glycosyltransferase 51 family.

The protein resides in the cell inner membrane. It catalyses the reaction [GlcNAc-(1-&gt;4)-Mur2Ac(oyl-L-Ala-gamma-D-Glu-L-Lys-D-Ala-D-Ala)](n)-di-trans,octa-cis-undecaprenyl diphosphate + beta-D-GlcNAc-(1-&gt;4)-Mur2Ac(oyl-L-Ala-gamma-D-Glu-L-Lys-D-Ala-D-Ala)-di-trans,octa-cis-undecaprenyl diphosphate = [GlcNAc-(1-&gt;4)-Mur2Ac(oyl-L-Ala-gamma-D-Glu-L-Lys-D-Ala-D-Ala)](n+1)-di-trans,octa-cis-undecaprenyl diphosphate + di-trans,octa-cis-undecaprenyl diphosphate + H(+). It functions in the pathway cell wall biogenesis; peptidoglycan biosynthesis. Its function is as follows. Peptidoglycan polymerase that catalyzes glycan chain elongation from lipid-linked precursors. The chain is Biosynthetic peptidoglycan transglycosylase from Bdellovibrio bacteriovorus (strain ATCC 15356 / DSM 50701 / NCIMB 9529 / HD100).